A 44-amino-acid polypeptide reads, in one-letter code: Large ribosomal subunit protein bL34 (44 aa).

Basic residues-rich tracts occupy residues methionine 1–methionine 22 and isoleucine 31–valine 44. The disordered stretch occupies residues methionine 1–valine 44.

The protein belongs to the bacterial ribosomal protein bL34 family.

This chain is Large ribosomal subunit protein bL34, found in Nostoc punctiforme (strain ATCC 29133 / PCC 73102).